The following is a 220-amino-acid chain: Deoxyribose-phosphate aldolase 2 (220 aa).

Catalysis depends on Asp-89, which acts as the Proton donor/acceptor. The active-site Schiff-base intermediate with acetaldehyde is Lys-151. The active-site Proton donor/acceptor is the Lys-180.

It belongs to the DeoC/FbaB aldolase family. DeoC type 1 subfamily.

It is found in the cytoplasm. The enzyme catalyses 2-deoxy-D-ribose 5-phosphate = D-glyceraldehyde 3-phosphate + acetaldehyde. Its pathway is carbohydrate degradation; 2-deoxy-D-ribose 1-phosphate degradation; D-glyceraldehyde 3-phosphate and acetaldehyde from 2-deoxy-alpha-D-ribose 1-phosphate: step 2/2. Functionally, catalyzes a reversible aldol reaction between acetaldehyde and D-glyceraldehyde 3-phosphate to generate 2-deoxy-D-ribose 5-phosphate. This Staphylococcus aureus (strain COL) protein is Deoxyribose-phosphate aldolase 2.